Here is a 450-residue protein sequence, read N- to C-terminus: Phosphoglucosamine mutase (450 aa).

Catalysis depends on S101, which acts as the Phosphoserine intermediate. Mg(2+)-binding residues include S101, D240, D242, and D244. S101 is modified (phosphoserine).

Belongs to the phosphohexose mutase family. Mg(2+) serves as cofactor. In terms of processing, activated by phosphorylation.

The catalysed reaction is alpha-D-glucosamine 1-phosphate = D-glucosamine 6-phosphate. Its function is as follows. Catalyzes the conversion of glucosamine-6-phosphate to glucosamine-1-phosphate. In Streptococcus pneumoniae serotype 19F (strain G54), this protein is Phosphoglucosamine mutase.